A 100-amino-acid polypeptide reads, in one-letter code: UPF0213 protein YhbQ (100 aa).

The region spanning 2–77 (TPWFLYLIRT…KQLTKRQKER (76 aa)) is the GIY-YIG domain.

Belongs to the UPF0213 family.

The sequence is that of UPF0213 protein YhbQ from Escherichia fergusonii (strain ATCC 35469 / DSM 13698 / CCUG 18766 / IAM 14443 / JCM 21226 / LMG 7866 / NBRC 102419 / NCTC 12128 / CDC 0568-73).